The sequence spans 260 residues: Imidazole glycerol phosphate synthase subunit HisF (260 aa).

Residues D11 and D130 contribute to the active site.

Belongs to the HisA/HisF family. As to quaternary structure, heterodimer of HisH and HisF.

The protein localises to the cytoplasm. It catalyses the reaction 5-[(5-phospho-1-deoxy-D-ribulos-1-ylimino)methylamino]-1-(5-phospho-beta-D-ribosyl)imidazole-4-carboxamide + L-glutamine = D-erythro-1-(imidazol-4-yl)glycerol 3-phosphate + 5-amino-1-(5-phospho-beta-D-ribosyl)imidazole-4-carboxamide + L-glutamate + H(+). The protein operates within amino-acid biosynthesis; L-histidine biosynthesis; L-histidine from 5-phospho-alpha-D-ribose 1-diphosphate: step 5/9. IGPS catalyzes the conversion of PRFAR and glutamine to IGP, AICAR and glutamate. The HisF subunit catalyzes the cyclization activity that produces IGP and AICAR from PRFAR using the ammonia provided by the HisH subunit. The chain is Imidazole glycerol phosphate synthase subunit HisF from Psychrobacter arcticus (strain DSM 17307 / VKM B-2377 / 273-4).